A 243-amino-acid chain; its full sequence is MRLRNQLQSVYKMDPLRNEEEVRVKIKDLNEHIVCCLCAGYFVDATTITECLHTFCKSCIVKYLQTSKYCPMCNIKIHETQPLLNLKLDRVMQDIVYKLVPGLQDSEEKRIRDFYQSRGLDRVSQPSGEEPALRGLGLPFTSFDHYYRYDEQLSLCLERLSSGKDKNKNVLQNKYVRCSVRAEVRHLRRVLCHRLMLNPQHVQLLFDNEVLPDHMTMKQLWLSRWFGKPSPLLLQYSVKEKRR.

Lys12 participates in a covalent cross-link: Glycyl lysine isopeptide (Lys-Gly) (interchain with G-Cter in SUMO2). The RING-type zinc finger occupies 35 to 74 (CCLCAGYFVDATTITECLHTFCKSCIVKYLQTSKYCPMCN). Positions 74-231 (NIKIHETQPL…LSRWFGKPSP (158 aa)) are necessary for repressor activity. Lys76 participates in a covalent cross-link: Glycyl lysine isopeptide (Lys-Gly) (interchain with G-Cter in SUMO2). The tract at residues 138–239 (LPFTSFDHYY…SPLLLQYSVK (102 aa)) is required for the interaction with the KDM2B-SKP1 heterodimeric complex. Residues 151 to 239 (EQLSLCLERL…SPLLLQYSVK (89 aa)) are RING-finger and WD40-associated ubiquitin-like domain (RAWUL); sufficient for interaction with BCOR and BCORL1.

Interacts with BCORL1, forming heterodimers. The PCGF1-BCORL1 heterodimeric complex interacts with the KDM2B-SKP1 heterodimeric complex to form a homotetrameric polycomb repression complex 1 (PRC1.1). Component of the repressive BCOR complex containing a Polycomb group subcomplex at least composed of RYBP, RING1 and RNF2/RING2. Specifically interacts with BCOR, RING1 and RNF2/RING2. Component of a PRC1-like complex. Interacts with CBX6, CBX7 and CBX8. Interacts with DPPA4, NANOG, POU5F1 and RYBP. As to expression, highly expressed in brain, cerebellum, heart and testis.

The protein localises to the nucleus. Component of the Polycomb group (PcG) multiprotein BCOR complex, a complex required to maintain the transcriptionally repressive state of some genes, such as BCL6 and the cyclin-dependent kinase inhibitor, CDKN1A. Transcriptional repressor that may be targeted to the DNA by BCL6; this transcription repressor activity may be related to PKC signaling pathway. Represses CDKN1A expression by binding to its promoter, and this repression is dependent on the retinoic acid response element (RARE element). Promotes cell cycle progression and enhances cell proliferation as well. May have a positive role in tumor cell growth by down-regulating CDKN1A. Component of a Polycomb group (PcG) multiprotein PRC1-like complex, a complex class required to maintain the transcriptionally repressive state of many genes, including Hox genes, throughout development. PcG PRC1 complex acts via chromatin remodeling and modification of histones; it mediates monoubiquitination of histone H2A 'Lys-119', rendering chromatin heritably changed in its expressibility. Within the PRC1-like complex, regulates RNF2 ubiquitin ligase activity. Regulates the expression of DPPA4 and NANOG in the NT2 embryonic carcinoma cells. The chain is Polycomb group RING finger protein 1 (Pcgf1) from Rattus norvegicus (Rat).